The sequence spans 61 residues: Arabinogalactan protein 15 (61 aa).

The signal sequence occupies residues methionine 1–alanine 22. Glutamine 23 carries the pyrrolidone carboxylic acid modification. 4-hydroxyproline is present on residues proline 27, proline 29, and proline 31. O-linked (Ara...) hydroxyproline glycosylation is found at proline 27, proline 29, and proline 31. The GPI-anchor amidated serine moiety is linked to residue serine 35. Residues serine 36–isoleucine 61 constitute a propeptide, removed in mature form.

The protein belongs to the AG-peptide AGP family. Contains 4-hydroxyproline; hydroxylated on Pro-27, Pro-29 and Pro-31. In terms of processing, O-glycosylated on hydroxyprolines; noncontiguous hydroxylproline residues are glycosylated with arabinogalactan. As to expression, expressed in reproductive tissues. Expressed in chalaza, funiculus, stigma, septum, style, integument and transmitting tract.

Its subcellular location is the cell membrane. Its function is as follows. Proteoglycan that seems to be implicated in diverse developmental roles such as differentiation, cell-cell recognition, embryogenesis and programmed cell death. The chain is Arabinogalactan protein 15 from Arabidopsis thaliana (Mouse-ear cress).